The primary structure comprises 266 residues: F-box only protein 50 (266 aa).

The span at methionine 1–alanine 16 shows a compositional bias: basic and acidic residues. The segment at methionine 1 to asparagine 53 is disordered. Pro residues predominate over residues proline 27–proline 41. 4 positions are modified to phosphoserine: serine 31, serine 37, serine 40, and serine 43. The residue at position 46 (threonine 46) is a Phosphothreonine. Residues leucine 86–leucine 264 form the FBA domain.

In terms of tissue distribution, strongly expressed in kidney. Weakly expressed in stomach, colon, duodenum and prostate.

It is found in the cytoplasm. Functionally, promotes cell proliferation. The polypeptide is F-box only protein 50 (Nccrp1) (Mus musculus (Mouse)).